Here is a 138-residue protein sequence, read N- to C-terminus: NADPH-dependent 7-cyano-7-deazaguanine reductase (138 aa).

Cys-53 (thioimide intermediate) is an active-site residue. Asp-60 acts as the Proton donor in catalysis. Residues 75–77 and 94–95 contribute to the substrate site; these read VEL and HE.

The protein belongs to the GTP cyclohydrolase I family. QueF type 1 subfamily.

The protein resides in the cytoplasm. It catalyses the reaction 7-aminomethyl-7-carbaguanine + 2 NADP(+) = 7-cyano-7-deazaguanine + 2 NADPH + 3 H(+). The protein operates within tRNA modification; tRNA-queuosine biosynthesis. Functionally, catalyzes the NADPH-dependent reduction of 7-cyano-7-deazaguanine (preQ0) to 7-aminomethyl-7-deazaguanine (preQ1). This Gloeothece citriformis (strain PCC 7424) (Cyanothece sp. (strain PCC 7424)) protein is NADPH-dependent 7-cyano-7-deazaguanine reductase.